A 98-amino-acid chain; its full sequence is Large ribosomal subunit protein uL23 (98 aa).

Belongs to the universal ribosomal protein uL23 family. As to quaternary structure, part of the 50S ribosomal subunit. Contacts protein L29, and trigger factor when it is bound to the ribosome.

Functionally, one of the early assembly proteins it binds 23S rRNA. One of the proteins that surrounds the polypeptide exit tunnel on the outside of the ribosome. Forms the main docking site for trigger factor binding to the ribosome. This is Large ribosomal subunit protein uL23 from Streptococcus pyogenes serotype M1.